The chain runs to 455 residues: Argininosuccinate lyase (455 aa).

This sequence belongs to the lyase 1 family. Argininosuccinate lyase subfamily.

The protein resides in the cytoplasm. It catalyses the reaction 2-(N(omega)-L-arginino)succinate = fumarate + L-arginine. Its pathway is amino-acid biosynthesis; L-arginine biosynthesis; L-arginine from L-ornithine and carbamoyl phosphate: step 3/3. The protein is Argininosuccinate lyase of Shewanella denitrificans (strain OS217 / ATCC BAA-1090 / DSM 15013).